We begin with the raw amino-acid sequence, 440 residues long: MTNMSWSFLTRLLEEIHNHSTFVGKVWLTVLVVFRIVLTAVGGESIYSDEQSKFTCNTRQPGCDNVCYDAFAPLSHVRFWVFQIVVISTPSVMYLGYAVHRLARASEQERRRALRRRPGPRRLPRAQLPPPPPGWPDTTDLGEAEPILALEEDEDEEPGAPEGPGEDTEEERTEDVAAKGGGGDGKTVVTPGPAGQHDGRRRIQREGLMRVYVAQLVVRAAFEVAFLVGQYLLYGFEVPPFFACSRQPCPHVVDCFVSRPTEKTVFLLVMYVVSCLCLLLNLCEMAHLGLGSAQDAVRGRRGASAAGPGPAPRPPPCAFPAAAAGLACPPDYSLVVRAAERARAHDQNLANLALQALRDGAAVAAVSADRDSPPCSGLNATSRGPPRAGGPASGTGSATSGGTVGEQGRSGAQEQLATKPRVGSEKGSTGSRDGKATVWI.

Over 1–21 (MTNMSWSFLTRLLEEIHNHST) the chain is Cytoplasmic. The chain crosses the membrane as a helical span at residues 22–42 (FVGKVWLTVLVVFRIVLTAVG). The Extracellular portion of the chain corresponds to 43-78 (GESIYSDEQSKFTCNTRQPGCDNVCYDAFAPLSHVR). The helical transmembrane segment at 79–99 (FWVFQIVVISTPSVMYLGYAV) threads the bilayer. Over 100–223 (HRLARASEQE…AQLVVRAAFE (124 aa)) the chain is Cytoplasmic. Positions 108-199 (QERRRALRRR…TPGPAGQHDG (92 aa)) are disordered. The span at 112 to 124 (RALRRRPGPRRLP) shows a compositional bias: basic residues. The segment covering 150 to 173 (LEEDEDEEPGAPEGPGEDTEEERT) has biased composition (acidic residues). The helical transmembrane segment at 224–244 (VAFLVGQYLLYGFEVPPFFAC) threads the bilayer. Residues 245-264 (SRQPCPHVVDCFVSRPTEKT) are Extracellular-facing. The chain crosses the membrane as a helical span at residues 265–285 (VFLLVMYVVSCLCLLLNLCEM). Topologically, residues 286–440 (AHLGLGSAQD…SRDGKATVWI (155 aa)) are cytoplasmic. The segment at 368 to 440 (ADRDSPPCSG…SRDGKATVWI (73 aa)) is disordered. S372 carries the phosphoserine modification. Residues 380–401 (ATSRGPPRAGGPASGTGSATSG) are compositionally biased toward low complexity.

Belongs to the connexin family. Gamma-type subfamily. In terms of assembly, a connexon is composed of a hexamer of connexins. Interacts with TJP1. In terms of tissue distribution, mainly expressed by oligodendrocytes in the central nervous system. Expressed in optic nerve (at protein level).

It is found in the cell membrane. Its subcellular location is the cell junction. The protein localises to the gap junction. Functionally, one gap junction consists of a cluster of closely packed pairs of transmembrane channels, the connexons, through which materials of low MW diffuse from one cell to a neighboring cell. May play a role in myelination in central and peripheral nervous systems. This is Gap junction gamma-2 protein (Gjc2) from Rattus norvegicus (Rat).